Reading from the N-terminus, the 221-residue chain is 2-amino-5-formylamino-6-ribosylaminopyrimidin-4(3H)-one 5'-monophosphate deformylase (221 aa).

The Fe cation site is built by E29, H31, D40, and H108.

It belongs to the creatininase superfamily. FAPy deformylase family. As to quaternary structure, homodimer. Fe(2+) is required as a cofactor. Requires Zn(2+) as cofactor.

It catalyses the reaction 2-amino-5-formylamino-6-(5-phospho-D-ribosylamino)pyrimidin-4(3H)-one + H2O = 2,5-diamino-6-(1-D-ribosylamino)pyrimidin-4(3H)-one 5'-phosphate + formate + H(+). Its pathway is cofactor biosynthesis; coenzyme F420 biosynthesis. It participates in cofactor biosynthesis; riboflavin biosynthesis. In terms of biological role, catalyzes the hydrolysis of the formamide of 2-amino-5-formylamino-6-ribosylamino-4(3H)-pyrimidinone 5'-monophosphate (FAPy) to form 2,5-diamino-6-ribosylamino-4(3H)-pyrimidinone 5'-phosphate (APy). This is 2-amino-5-formylamino-6-ribosylaminopyrimidin-4(3H)-one 5'-monophosphate deformylase from Methanococcus maripaludis (strain C7 / ATCC BAA-1331).